The sequence spans 220 residues: CRISPR system Cms endoribonuclease Csm3 (220 aa).

The protein belongs to the CRISPR-associated Csm3 family. As to quaternary structure, part of the Csm effector complex that includes at least Cas10(1), Csm2(3), Csm3(5), Csm4(1), Csm5(1) and mature crRNA. The Csm complex is elongated and slightly twisted with a maximal length of 215 Angstroms and a diameter of 75-80 Angstroms. It has been modeled to have a central protein filamant of Csm3 subunits along which the dsRNA helix of paired crRNA and target RNA binds. The filament is capped at one end by Cas10 and Csm4 and at the other end by Csm5; ssDNA is thought to bind to the N-terminal HD domain of Cas10. Csm with a precursor crRNA does not include Csm5, while Cas6, the enzyme probably involved in pre-crRNA processing, is found associated with a subset of the Csm complex. A metal cation serves as cofactor.

With respect to regulation, target ssRNase is inhibited by EDTA. In terms of biological role, CRISPR (clustered regularly interspaced short palindromic repeat) is an adaptive immune system that provides protection against mobile genetic elements (viruses, transposable elements and conjugative plasmids). CRISPR clusters contain spacers, sequences complementary to antecedent mobile elements, and target invading nucleic acids. CRISPR clusters are transcribed and processed into CRISPR RNA (crRNA). The type III-A Csm effector complex binds crRNA and acts as a crRNA-guided RNase, DNase and cyclic oligoadenylate synthase; binding of target RNA cognate to the crRNA is required for all activities. In a heterologous host this Csm effector complex restricts ssRNA phage MS2, suggesting it may target RNA viruses in vivo. Functionally, csm functions as a non-specific ssDNase. Base-pairing between crRNA and target RNA to form a ternary Csm complex activates a ssDNase activity; target RNA cleavage suppresses the ssDNase, a temporal control that prevents uncontrolled DNA degradation. Viral RNA transcripts probably tether the Csm complex to the viral genome, recruiting Cas10 ssDNA activity which is able to degrade DNA in the transcription bubble, spatially controlling the DNase activity. Its function is as follows. This subunit has the target ssRNA endonuclease activity; it cleaves multiple sites in the target RNA at 6 nucleotide intervals. The number of cleavage sites in the target RNA correlates with the number of Csm3 subunits in the Csm effector complex. In the Csm complex target RNA and ssDNA are cleaved simultaneously, although RNase activity (of Csm3) is much faster. RNA cleavage by Csm3 is not required for ssDNase activity as Csm complex with inactive Csm3 still has ssDNase activity; however as the cleaved target RNA products dissociate away ssDNase activity decreases. This chain is CRISPR system Cms endoribonuclease Csm3, found in Streptococcus thermophilus.